Here is a 261-residue protein sequence, read N- to C-terminus: Global transcriptional regulator CodY (261 aa).

Positions 1–159 are GAF domain; the sequence is MANLLDKTRK…ASTVVGLQLL (159 aa). A DNA-binding region (H-T-H motif) is located at residues 207–226; the sequence is ASVIADRIGITRSVIVNALR.

It belongs to the CodY family.

The protein resides in the cytoplasm. DNA-binding global transcriptional regulator which is involved in the adaptive response to starvation and acts by directly or indirectly controlling the expression of numerous genes in response to nutrient availability. During rapid exponential growth, CodY is highly active and represses genes whose products allow adaptation to nutrient depletion. The protein is Global transcriptional regulator CodY of Streptococcus thermophilus (strain CNRZ 1066).